Consider the following 703-residue polypeptide: Polyribonucleotide nucleotidyltransferase (703 aa).

Mg(2+)-binding residues include aspartate 486 and aspartate 492. The region spanning 553–612 (PKIEIIHINPDKIRDVIGPGGKKINEIIDATGVKLDIEQDGTVFIGSSDASMIEAAKKLI) is the KH domain. The region spanning 622–690 (GQIYMATVKR…KQGRVNASRK (69 aa)) is the S1 motif domain.

The protein belongs to the polyribonucleotide nucleotidyltransferase family. Requires Mg(2+) as cofactor.

It is found in the cytoplasm. The enzyme catalyses RNA(n+1) + phosphate = RNA(n) + a ribonucleoside 5'-diphosphate. In terms of biological role, involved in mRNA degradation. Catalyzes the phosphorolysis of single-stranded polyribonucleotides processively in the 3'- to 5'-direction. This Macrococcus caseolyticus (strain JCSC5402) (Macrococcoides caseolyticum) protein is Polyribonucleotide nucleotidyltransferase.